We begin with the raw amino-acid sequence, 427 residues long: MRIFEQLESQVRSYIRSFPVIFERSKGAYLYDEQGKAYIDFFAGAGTLNYGHNHPKIIEAMIAYLQNDGILHGLDKATSAKKAFLQTLSETILEPRHMDYKVQFTGPTGTNAIESALKLARMVKGRSNVIAFTNAFHGLTMGSMAVTGNAFYRDEAFVNRANVSFMPFDGYFGEEVDTSLYLRRFLEDGSSGVDLPAAIILETIQAEGGVNVARDEWLRSVEKVCRDFDILLIVDEIQVGNGRTGRFFSFEESGIRPDIITLSKSIGGGLPLALVLLRPELDQWKPGEHTGTFRGNNLAFVAAKEALEYWSDSVLGEWVKHNSAILKEGLEALVQAFPELGMSARGRGLIYGLEIPLSGMAKEVSANCFQKGLVIELAGASDTVLKFLPPLIIEEETLREGLGIIKEAIGEVLREREARMGEVFGDR.

Lys-264 is modified (N6-(pyridoxal phosphate)lysine).

It belongs to the class-III pyridoxal-phosphate-dependent aminotransferase family. It depends on pyridoxal 5'-phosphate as a cofactor.

It catalyses the reaction L-2,4-diaminobutanoate + 2-oxoglutarate = L-aspartate 4-semialdehyde + L-glutamate. It participates in amine and polyamine biosynthesis; ectoine biosynthesis; L-ectoine from L-aspartate 4-semialdehyde: step 1/3. Catalyzes reversively the conversion of L-aspartate beta-semialdehyde (ASA) to L-2,4-diaminobutyrate (DABA) by transamination with L-glutamate. In Wolinella succinogenes (strain ATCC 29543 / DSM 1740 / CCUG 13145 / JCM 31913 / LMG 7466 / NCTC 11488 / FDC 602W) (Vibrio succinogenes), this protein is Diaminobutyrate--2-oxoglutarate transaminase (ectB).